A 94-amino-acid polypeptide reads, in one-letter code: Integration host factor subunit beta (94 aa).

It belongs to the bacterial histone-like protein family. As to quaternary structure, heterodimer of an alpha and a beta chain.

In terms of biological role, this protein is one of the two subunits of integration host factor, a specific DNA-binding protein that functions in genetic recombination as well as in transcriptional and translational control. This Nitrosospira multiformis (strain ATCC 25196 / NCIMB 11849 / C 71) protein is Integration host factor subunit beta.